The following is a 260-amino-acid chain: GTP cyclohydrolase FolE2 (260 aa).

It belongs to the GTP cyclohydrolase IV family.

The enzyme catalyses GTP + H2O = 7,8-dihydroneopterin 3'-triphosphate + formate + H(+). It functions in the pathway cofactor biosynthesis; 7,8-dihydroneopterin triphosphate biosynthesis; 7,8-dihydroneopterin triphosphate from GTP: step 1/1. Converts GTP to 7,8-dihydroneopterin triphosphate. The sequence is that of GTP cyclohydrolase FolE2 from Desulfosudis oleivorans (strain DSM 6200 / JCM 39069 / Hxd3) (Desulfococcus oleovorans).